Consider the following 265-residue polypeptide: Glutamate racemase (265 aa).

Residues 12-13 and 44-45 each bind substrate; these read DS and YG. The Proton donor/acceptor role is filled by Cys75. 76–77 serves as a coordination point for substrate; that stretch reads NT. Cys186 functions as the Proton donor/acceptor in the catalytic mechanism. 187–188 is a substrate binding site; sequence TH.

This sequence belongs to the aspartate/glutamate racemases family.

The catalysed reaction is L-glutamate = D-glutamate. It functions in the pathway cell wall biogenesis; peptidoglycan biosynthesis. In terms of biological role, provides the (R)-glutamate required for cell wall biosynthesis. This Pseudomonas putida (strain ATCC 700007 / DSM 6899 / JCM 31910 / BCRC 17059 / LMG 24140 / F1) protein is Glutamate racemase.